Consider the following 355-residue polypeptide: UDP-N-acetylglucosamine--N-acetylmuramyl-(pentapeptide) pyrophosphoryl-undecaprenol N-acetylglucosamine transferase (355 aa).

Residues 13-15 (TGG), N125, R162, S190, I244, and Q289 each bind UDP-N-acetyl-alpha-D-glucosamine.

The protein belongs to the glycosyltransferase 28 family. MurG subfamily.

It localises to the cell inner membrane. It carries out the reaction di-trans,octa-cis-undecaprenyl diphospho-N-acetyl-alpha-D-muramoyl-L-alanyl-D-glutamyl-meso-2,6-diaminopimeloyl-D-alanyl-D-alanine + UDP-N-acetyl-alpha-D-glucosamine = di-trans,octa-cis-undecaprenyl diphospho-[N-acetyl-alpha-D-glucosaminyl-(1-&gt;4)]-N-acetyl-alpha-D-muramoyl-L-alanyl-D-glutamyl-meso-2,6-diaminopimeloyl-D-alanyl-D-alanine + UDP + H(+). The protein operates within cell wall biogenesis; peptidoglycan biosynthesis. In terms of biological role, cell wall formation. Catalyzes the transfer of a GlcNAc subunit on undecaprenyl-pyrophosphoryl-MurNAc-pentapeptide (lipid intermediate I) to form undecaprenyl-pyrophosphoryl-MurNAc-(pentapeptide)GlcNAc (lipid intermediate II). This chain is UDP-N-acetylglucosamine--N-acetylmuramyl-(pentapeptide) pyrophosphoryl-undecaprenol N-acetylglucosamine transferase, found in Neisseria meningitidis serogroup C / serotype 2a (strain ATCC 700532 / DSM 15464 / FAM18).